The chain runs to 429 residues: 3-phosphoshikimate 1-carboxyvinyltransferase (429 aa).

Positions 23, 24, and 28 each coordinate 3-phosphoshikimate. Residue Lys23 coordinates phosphoenolpyruvate. Residues Gly95 and Arg123 each contribute to the phosphoenolpyruvate site. 3-phosphoshikimate contacts are provided by Ser168, Gln170, Asp316, and Lys343. Gln170 is a phosphoenolpyruvate binding site. Residue Asp316 is the Proton acceptor of the active site. Phosphoenolpyruvate-binding residues include Arg347 and Arg389.

Belongs to the EPSP synthase family. Monomer.

Its subcellular location is the cytoplasm. The enzyme catalyses 3-phosphoshikimate + phosphoenolpyruvate = 5-O-(1-carboxyvinyl)-3-phosphoshikimate + phosphate. The protein operates within metabolic intermediate biosynthesis; chorismate biosynthesis; chorismate from D-erythrose 4-phosphate and phosphoenolpyruvate: step 6/7. Its function is as follows. Catalyzes the transfer of the enolpyruvyl moiety of phosphoenolpyruvate (PEP) to the 5-hydroxyl of shikimate-3-phosphate (S3P) to produce enolpyruvyl shikimate-3-phosphate and inorganic phosphate. This Bacillus cereus (strain 03BB102) protein is 3-phosphoshikimate 1-carboxyvinyltransferase.